The primary structure comprises 218 residues: Glutathione S-transferase U24 (218 aa).

Positions 3–82 constitute a GST N-terminal domain; sequence DEVILLDFWA…YIDETWPDNN (80 aa). Glutathione is bound by residues 13 to 14, 39 to 40, 53 to 54, and 66 to 67; these read SM, NK, KI, and ES. The GST C-terminal domain maps to 88-215; sequence DPYKRAHAKF…TFISERRKKL (128 aa). Position 148 is a phosphothreonine (threonine 148).

It belongs to the GST superfamily. Tau family.

It localises to the cytoplasm. Its subcellular location is the cytosol. It carries out the reaction RX + glutathione = an S-substituted glutathione + a halide anion + H(+). Functionally, may be involved in the conjugation of reduced glutathione to a wide number of exogenous and endogenous hydrophobic electrophiles and have a detoxification role against certain herbicides. This is Glutathione S-transferase U24 (GSTU24) from Arabidopsis thaliana (Mouse-ear cress).